We begin with the raw amino-acid sequence, 589 residues long: MFSILNKLGIIWLALANISNCDNSKSGHKSIPKYNVKYYHANIPKDFANRFVELNDKIVENGSFEILGIDGQPSKNQYLCFTPNPNTAVNVSIESAQRNTRSKEIENEPKSEAEIIQRGVEMIEKSFSRKDCVFAYGSNGGYWTLGYCYGDKVVQFHENLQHFVATGKHKPEYPDYIYVLGRFKGSSKKPTNLDNQSPWASNNLDLSEFTIHESSIISDATAKNEQSRFLQHTLYDGEICDLTRKPRSIDIIYKCDPNHRGRIEILDQQEIKTCVYQMVIGVPKLCSLDEFRPNKVEDQIIDIDCKLIDQTNKVKADKLSYQDFFYYTDDIPSDNKIFPIPHSYKVSLNNYNLSPCGHGFYLGQSKLPINSPSVYFNFRHILVFNDQYHSSSDLLEKLGKMLKVCVGNKILSPHIENKRQSLLSWNDTFILWFELYDFYGSFISLVKVSRDGSKEELELKLRLINPETMLDQDGDLVKVPEFDAPNNAWNFQKFSKGKGSALDSTNNDKNNKATAENDKQYQSTSTDIVTVTVTESLETTSSEDGTEEVSNEMVILKKLADKLGMTDINELHQAIEDLDIELEVQHDEL.

Residues 1 to 21 (MFSILNKLGIIWLALANISNC) form the signal peptide. Asparagine 17, asparagine 61, and asparagine 90 each carry an N-linked (GlcNAc...) asparagine glycan. Residues 130-288 (KDCVFAYGSN…VIGVPKLCSL (159 aa)) form the MRH domain. A disulfide bridge links cysteine 132 with cysteine 148. Tryptophan 143, glutamine 155, aspartate 241, arginine 247, glutamate 270, and tyrosine 276 together coordinate a mannooligosaccharide derivative. 2 disulfides stabilise this stretch: cysteine 240-cysteine 274 and cysteine 255-cysteine 286. Asparagine 426 carries an N-linked (GlcNAc...) asparagine glycan. The disordered stretch occupies residues 497-520 (GKGSALDSTNNDKNNKATAENDKQ). The span at 509–519 (KNNKATAENDK) shows a compositional bias: basic and acidic residues. The short motif at 586–589 (HDEL) is the Prevents secretion from ER element.

The protein belongs to the OS-9 family. Interacts with missfolded ER lumenal proteins.

The protein resides in the endoplasmic reticulum membrane. Its function is as follows. Lectin involved in the quality control of the secretory pathway. As a member of the endoplasmic reticulum-associated degradation lumenal (ERAD-L) surveillance system, targets misfolded endoplasmic reticulum lumenal glycoproteins for degradation. The chain is Protein OS-9 homolog (YOS9) from Debaryomyces hansenii (strain ATCC 36239 / CBS 767 / BCRC 21394 / JCM 1990 / NBRC 0083 / IGC 2968) (Yeast).